A 357-amino-acid polypeptide reads, in one-letter code: Probable butyrate kinase 1 (357 aa).

This sequence belongs to the acetokinase family.

The protein resides in the cytoplasm. The catalysed reaction is butanoate + ATP = butanoyl phosphate + ADP. In Caldanaerobacter subterraneus subsp. tengcongensis (strain DSM 15242 / JCM 11007 / NBRC 100824 / MB4) (Thermoanaerobacter tengcongensis), this protein is Probable butyrate kinase 1.